Reading from the N-terminus, the 584-residue chain is MARPSPLCLLLLLTLLTPIVPSNSLLTEPPFRWRFYLHETWTQGNRLSTVTLATVDCQPHGCQAQVTFNFTSFKSVLRGWSNPTICFVYDQTHSNCRDYWVDTNGGCPYAYCRMHVTQLHTAKKLQHTYRLTSDGRTTYFLTIPDPWDSRWVSGVTGRLYRWPTDSYPVGKLRIFLTYIRVIPQVLSNLKDQADNIKHQEEVINTLVQSHPKADMVTYDDKAEAGPFSWITLVRHGARLVNMAGLVNLSHCFLCTALSQPPLVAVPLPQAFNTSGNHTAHPSGVFSEQVPLFRDPLQPQFPFCYTTPNSSWCNQTYSGSLSNLSAPAGGYFWCNFTLTKHLNISSNNTLSRNLCLPISLVPRLTLYSEAELSSLVNPPMRQKRAVFPPLVIGVSLTSSLVASGLGTGAIVHFISSSQDLSIKLQMAIEASAESLASLQRQITSVAKVAMQNRRALDLLTADKGGTCMFLGEECCYYINESGLVETSLLTLDKIRDGLHRPSSTPNYGGGWWQSPLTTWIIPFISPILIICLLLLIAPCVLKFIKNRISEVSRVTVNQMLLHPYSRLPTSEDHYDDALTQQEAAR.

An N-terminal signal peptide occupies residues 1–22 (MARPSPLCLLLLLTLLTPIVPS). At 23-518 (NSLLTEPPFR…GWWQSPLTTW (496 aa)) the chain is on the extracellular side. N-linked (GlcNAc...) asparagine glycosylation is found at Asn69 and Asn247. The CXXC motif lies at 251–254 (CFLC). N-linked (GlcNAc...) asparagine glycosylation is found at Asn272, Asn276, Asn308, Asn313, Asn322, Asn334, Asn342, and Asn346. The fusion peptide stretch occupies residues 384-404 (AVFPPLVIGVSLTSSLVASGL). The CKS-17 signature appears at 449–465 (MQNRRALDLLTADKGGT). Cys466 and Cys473 are disulfide-bonded. A CX6CC motif is present at residues 466–474 (CMFLGEECC). Asn478 carries an N-linked (GlcNAc...) asparagine glycan. The chain crosses the membrane as a helical span at residues 519-539 (IIPFISPILIICLLLLIAPCV). The Cytoplasmic portion of the chain corresponds to 540 to 584 (LKFIKNRISEVSRVTVNQMLLHPYSRLPTSEDHYDDALTQQEAAR).

This sequence belongs to the gamma type-C retroviral envelope protein family. HERV class-I F(c)1 env subfamily. In terms of assembly, the surface (SU) and transmembrane (TM) proteins form a heterodimer. SU and TM are attached by noncovalent interactions or by a labile interchain disulfide bond. In terms of processing, specific enzymatic cleavages in vivo yield the mature SU and TM proteins. Post-translationally, the CXXC motif is highly conserved across a broad range of retroviral envelope proteins. It is thought to participate in the formation of a labile disulfide bond possibly with the CX6CC motif present in the transmembrane protein. Low expression in skin, testis and trachea.

The protein resides in the virion. The protein localises to the cell membrane. In terms of biological role, retroviral envelope proteins mediate receptor recognition and membrane fusion during early infection. Endogenous envelope proteins may have kept, lost or modified their original function during evolution. This endogenous envelope protein has lost its original fusogenic properties. SU mediates receptor recognition. Its function is as follows. TM anchors the envelope heterodimer to the viral membrane through one transmembrane domain. The other hydrophobic domain, called fusion peptide, mediates fusion of the viral membrane with the target cell membrane. This chain is Endogenous retrovirus group FC1 Env polyprotein (ERVFC1), found in Homo sapiens (Human).